The sequence spans 192 residues: Ribosome hibernation promotion factor (192 aa).

The interval Arg-95 to Thr-129 is disordered. Residues Asn-120–Thr-129 show a composition bias toward acidic residues.

This sequence belongs to the HPF/YfiA ribosome-associated protein family. Long HPF subfamily. As to quaternary structure, interacts with 100S ribosomes.

Its subcellular location is the cytoplasm. Required for dimerization of active 70S ribosomes into 100S ribosomes in stationary phase; 100S ribosomes are translationally inactive and sometimes present during exponential growth. This chain is Ribosome hibernation promotion factor, found in Staphylococcus haemolyticus (strain JCSC1435).